The primary structure comprises 96 residues: UPF0125 protein YfjF (96 aa).

Belongs to the UPF0125 (RnfH) family.

This chain is UPF0125 protein YfjF (yfjF), found in Escherichia coli O157:H7.